The primary structure comprises 346 residues: tRNA N6-adenosine threonylcarbamoyltransferase (346 aa).

Residues His117 and His121 each coordinate Fe cation. Residues 139–143, Asp172, Gly185, Asp189, and Asn278 contribute to the substrate site; that span reads VVSGG. Asp307 lines the Fe cation pocket.

It belongs to the KAE1 / TsaD family. May form a heterodimer with TsaB. Requires Fe(2+) as cofactor.

It is found in the cytoplasm. The catalysed reaction is L-threonylcarbamoyladenylate + adenosine(37) in tRNA = N(6)-L-threonylcarbamoyladenosine(37) in tRNA + AMP + H(+). Functionally, required for the formation of a threonylcarbamoyl group on adenosine at position 37 (t(6)A37) in tRNAs that read codons beginning with adenine. Is involved in the transfer of the threonylcarbamoyl moiety of threonylcarbamoyl-AMP (TC-AMP) to the N6 group of A37, together with TsaE and TsaB; this reaction does not require ATP in vitro. TsaD likely plays a direct catalytic role in this reaction. The chain is tRNA N6-adenosine threonylcarbamoyltransferase from Bacillus subtilis (strain 168).